A 468-amino-acid chain; its full sequence is Bone morphogenetic protein 3 (468 aa).

Residues 1–22 (MAGARGLLCLWLGYFCLNLAQG) form the signal peptide. Positions 23–358 (QRPNLHLPGL…EQTLKKARRK (336 aa)) are excised as a propeptide. Positions 29 to 53 (LPGLRETEPSDRATGGSPSPDLRPH) are disordered. N-linked (GlcNAc...) asparagine glycosylation is found at Asn115, Asn139, Asn171, and Asn216. The tract at residues 314–349 (RKPYKSLQTQPPEKSRNKKKQRKGSHQKGQTLQFDE) is disordered. Residues 329-339 (RNKKKQRKGSH) are compositionally biased toward basic residues. A compositionally biased stretch (polar residues) spans 340–349 (QKGQTLQFDE). Disulfide bonds link Cys366–Cys433, Cys395–Cys465, and Cys399–Cys467. N-linked (GlcNAc...) asparagine glycosylation occurs at Asn459.

It belongs to the TGF-beta family. In terms of assembly, homodimer; disulfide-linked.

The protein localises to the secreted. Negatively regulates bone density. Antagonizes the ability of certain osteogenic BMPs to induce osteoprogenitor differentiation and ossification. This Mus musculus (Mouse) protein is Bone morphogenetic protein 3 (Bmp3).